The sequence spans 629 residues: tRNA uridine 5-carboxymethylaminomethyl modification enzyme MnmG (629 aa).

FAD is bound by residues 14 to 19 (GAGHAG), Val126, and Ser181. 273-287 (GPRYCPSIEDKVVRF) is an NAD(+) binding site. Gln370 provides a ligand contact to FAD.

This sequence belongs to the MnmG family. As to quaternary structure, homodimer. Heterotetramer of two MnmE and two MnmG subunits. It depends on FAD as a cofactor.

The protein localises to the cytoplasm. In terms of biological role, NAD-binding protein involved in the addition of a carboxymethylaminomethyl (cmnm) group at the wobble position (U34) of certain tRNAs, forming tRNA-cmnm(5)s(2)U34. In Bacillus cereus (strain ATCC 14579 / DSM 31 / CCUG 7414 / JCM 2152 / NBRC 15305 / NCIMB 9373 / NCTC 2599 / NRRL B-3711), this protein is tRNA uridine 5-carboxymethylaminomethyl modification enzyme MnmG.